A 648-amino-acid chain; its full sequence is Indolepyruvate oxidoreductase subunit IorA (648 aa).

2 4Fe-4S ferredoxin-type domains span residues 585–614 and 616–645; these read PIYQ…WDAE and KKAR…KVRE. Cysteine 594, cysteine 597, cysteine 600, cysteine 606, cysteine 625, cysteine 628, cysteine 631, and cysteine 635 together coordinate [4Fe-4S] cluster.

In terms of assembly, heterodimer of the IorA and IorB subunits. Requires [4Fe-4S] cluster as cofactor.

The enzyme catalyses indole-3-pyruvate + 2 oxidized [2Fe-2S]-[ferredoxin] + CoA = (indol-3-yl)acetyl-CoA + 2 reduced [2Fe-2S]-[ferredoxin] + CO2 + H(+). Catalyzes the ferredoxin-dependent oxidative decarboxylation of arylpyruvates. The sequence is that of Indolepyruvate oxidoreductase subunit IorA (iorA) from Pyrococcus horikoshii (strain ATCC 700860 / DSM 12428 / JCM 9974 / NBRC 100139 / OT-3).